Consider the following 124-residue polypeptide: Probable glycine cleavage system H protein (124 aa).

Positions 23–104 constitute a Lipoyl-binding domain; the sequence is VATVGITDYA…PYKNWLVKIR (82 aa). An N6-lipoyllysine modification is found at lysine 64.

The protein belongs to the GcvH family. As to quaternary structure, the glycine cleavage system is composed of four proteins: P, T, L and H. The cofactor is (R)-lipoate.

Functionally, the glycine cleavage system catalyzes the degradation of glycine. The H protein shuttles the methylamine group of glycine from the P protein to the T protein. The sequence is that of Probable glycine cleavage system H protein from Picrophilus torridus (strain ATCC 700027 / DSM 9790 / JCM 10055 / NBRC 100828 / KAW 2/3).